Reading from the N-terminus, the 301-residue chain is Amine sulfotransferase (301 aa).

K46–W51 contributes to the 3'-phosphoadenylyl sulfate binding site. H101 acts as the Proton acceptor in catalysis. 3'-phosphoadenylyl sulfate is bound by residues R123, S131, Y186, A220–M225, and R252–G254.

This sequence belongs to the sulfotransferase 1 family. Expressed in male liver.

It localises to the cytoplasm. It carries out the reaction a primary amine + 3'-phosphoadenylyl sulfate = a sulfamate + adenosine 3',5'-bisphosphate + 2 H(+). Sulfotransferase that utilizes 3'-phospho-5'-adenylyl sulfate (PAPS) as sulfonate donor to catalyze the N-sulfonation of amines (PTHP, aniline, 4-chloroaniline, 2-naphthylamine). The chain is Amine sulfotransferase (SULT3A1) from Oryctolagus cuniculus (Rabbit).